We begin with the raw amino-acid sequence, 299 residues long: ATP phosphoribosyltransferase (299 aa).

The protein belongs to the ATP phosphoribosyltransferase family. Long subfamily. As to quaternary structure, equilibrium between an active dimeric form, an inactive hexameric form and higher aggregates. Interconversion between the various forms is largely reversible and is influenced by the natural substrates and inhibitors of the enzyme. Requires Mg(2+) as cofactor.

The protein resides in the cytoplasm. It catalyses the reaction 1-(5-phospho-beta-D-ribosyl)-ATP + diphosphate = 5-phospho-alpha-D-ribose 1-diphosphate + ATP. It participates in amino-acid biosynthesis; L-histidine biosynthesis; L-histidine from 5-phospho-alpha-D-ribose 1-diphosphate: step 1/9. Feedback inhibited by histidine. Catalyzes the condensation of ATP and 5-phosphoribose 1-diphosphate to form N'-(5'-phosphoribosyl)-ATP (PR-ATP). Has a crucial role in the pathway because the rate of histidine biosynthesis seems to be controlled primarily by regulation of HisG enzymatic activity. In Buchnera aphidicola subsp. Schizaphis graminum (strain Sg), this protein is ATP phosphoribosyltransferase (hisG).